We begin with the raw amino-acid sequence, 458 residues long: tRNA modification GTPase MnmE (458 aa).

(6S)-5-formyl-5,6,7,8-tetrahydrofolate is bound by residues arginine 23, glutamate 80, and lysine 122. One can recognise a TrmE-type G domain in the interval 218-380 (GMKIVIAGRP…LREHLQQTMG (163 aa)). Asparagine 228 is a binding site for K(+). Residues 228–233 (NVGKSS), 247–253 (TQIPGTT), 272–275 (DTAG), and 361–363 (SAR) contribute to the GTP site. Residue serine 232 participates in Mg(2+) binding. K(+) contacts are provided by threonine 247, isoleucine 249, and threonine 252. Threonine 253 is a Mg(2+) binding site. Residue lysine 458 coordinates (6S)-5-formyl-5,6,7,8-tetrahydrofolate.

The protein belongs to the TRAFAC class TrmE-Era-EngA-EngB-Septin-like GTPase superfamily. TrmE GTPase family. In terms of assembly, homodimer. Heterotetramer of two MnmE and two MnmG subunits. It depends on K(+) as a cofactor.

Its subcellular location is the cytoplasm. In terms of biological role, exhibits a very high intrinsic GTPase hydrolysis rate. Involved in the addition of a carboxymethylaminomethyl (cmnm) group at the wobble position (U34) of certain tRNAs, forming tRNA-cmnm(5)s(2)U34. This Hamiltonella defensa subsp. Acyrthosiphon pisum (strain 5AT) protein is tRNA modification GTPase MnmE.